The following is a 404-amino-acid chain: LL-diaminopimelate aminotransferase (404 aa).

Substrate contacts are provided by Tyr15 and Gly42. Residues Tyr72, Ala108–Lys109, Tyr132, Asn188, Tyr219, and Ser247–Ser249 each bind pyridoxal 5'-phosphate. Residues Lys109, Tyr132, and Asn188 each coordinate substrate. The residue at position 250 (Lys250) is an N6-(pyridoxal phosphate)lysine. 2 residues coordinate pyridoxal 5'-phosphate: Arg258 and Asn288. 2 residues coordinate substrate: Asn288 and Arg384.

It belongs to the class-I pyridoxal-phosphate-dependent aminotransferase family. LL-diaminopimelate aminotransferase subfamily. Homodimer. It depends on pyridoxal 5'-phosphate as a cofactor.

It catalyses the reaction (2S,6S)-2,6-diaminopimelate + 2-oxoglutarate = (S)-2,3,4,5-tetrahydrodipicolinate + L-glutamate + H2O + H(+). It functions in the pathway amino-acid biosynthesis; L-lysine biosynthesis via DAP pathway; LL-2,6-diaminopimelate from (S)-tetrahydrodipicolinate (aminotransferase route): step 1/1. In terms of biological role, involved in the synthesis of meso-diaminopimelate (m-DAP or DL-DAP), required for both lysine and peptidoglycan biosynthesis. Catalyzes the direct conversion of tetrahydrodipicolinate to LL-diaminopimelate. In Lachnoclostridium phytofermentans (strain ATCC 700394 / DSM 18823 / ISDg) (Clostridium phytofermentans), this protein is LL-diaminopimelate aminotransferase.